Here is a 351-residue protein sequence, read N- to C-terminus: Biotin synthase (351 aa).

One can recognise a Radical SAM core domain in the interval 73–298; the sequence is PEVEVEGIIS…RTILRYSGGR (226 aa). C88, C92, and C95 together coordinate [4Fe-4S] cluster. Residues C131, C164, C223, and R293 each coordinate [2Fe-2S] cluster.

Belongs to the radical SAM superfamily. Biotin synthase family. In terms of assembly, homodimer. The cofactor is [4Fe-4S] cluster. Requires [2Fe-2S] cluster as cofactor.

It carries out the reaction (4R,5S)-dethiobiotin + (sulfur carrier)-SH + 2 reduced [2Fe-2S]-[ferredoxin] + 2 S-adenosyl-L-methionine = (sulfur carrier)-H + biotin + 2 5'-deoxyadenosine + 2 L-methionine + 2 oxidized [2Fe-2S]-[ferredoxin]. It participates in cofactor biosynthesis; biotin biosynthesis; biotin from 7,8-diaminononanoate: step 2/2. In terms of biological role, catalyzes the conversion of dethiobiotin (DTB) to biotin by the insertion of a sulfur atom into dethiobiotin via a radical-based mechanism. The sequence is that of Biotin synthase from Frankia alni (strain DSM 45986 / CECT 9034 / ACN14a).